We begin with the raw amino-acid sequence, 567 residues long: Urease subunit alpha (567 aa).

The Urease domain maps to 129 to 567; it reads GGVDSHIHFI…LPLAQRYFLF (439 aa). Residues histidine 134, histidine 136, and lysine 217 each contribute to the Ni(2+) site. At lysine 217 the chain carries N6-carboxylysine. Histidine 219 lines the substrate pocket. Histidine 246 and histidine 272 together coordinate Ni(2+). The Proton donor role is filled by histidine 320. A Ni(2+)-binding site is contributed by aspartate 360.

It belongs to the metallo-dependent hydrolases superfamily. Urease alpha subunit family. Heterotrimer of UreA (gamma), UreB (beta) and UreC (alpha) subunits. Three heterotrimers associate to form the active enzyme. It depends on Ni cation as a cofactor. Post-translationally, carboxylation allows a single lysine to coordinate two nickel ions.

The protein localises to the cytoplasm. The enzyme catalyses urea + 2 H2O + H(+) = hydrogencarbonate + 2 NH4(+). Its pathway is nitrogen metabolism; urea degradation; CO(2) and NH(3) from urea (urease route): step 1/1. In Pseudomonas putida (strain ATCC 47054 / DSM 6125 / CFBP 8728 / NCIMB 11950 / KT2440), this protein is Urease subunit alpha.